Reading from the N-terminus, the 331-residue chain is Ubiquinone biosynthesis protein UbiU (331 aa).

[4Fe-4S] cluster is bound by residues C169, C176, C193, and C232.

It belongs to the peptidase U32 family. UbiU subfamily. In terms of assembly, forms a heterodimer with UbiV. [4Fe-4S] cluster is required as a cofactor.

The protein operates within cofactor biosynthesis; ubiquinone biosynthesis. Functionally, required for O(2)-independent ubiquinone (coenzyme Q) biosynthesis. Together with UbiV, is essential for the C6-hydroxylation reaction in the oxygen-independent ubiquinone biosynthesis pathway. The polypeptide is Ubiquinone biosynthesis protein UbiU (Escherichia coli (strain K12)).